A 355-amino-acid chain; its full sequence is Plasmodial-specific protein LAV1-2 (355 aa).

2 consecutive EF-hand domains span residues glutamate 151 to threonine 186 and asparagine 217 to aspartate 252. Residues aspartate 230, asparagine 232, asparagine 234, threonine 236, glutamate 241, aspartate 265, aspartate 267, serine 269, aspartate 271, glutamate 276, aspartate 295, aspartate 297, serine 299, glutamine 301, glutamate 306, aspartate 332, aspartate 334, serine 336, serine 338, and glutamate 343 each contribute to the Ca(2+) site. EF-hand domains follow at residues leucine 282–proline 317 and serine 319–aspartate 354.

The chain is Plasmodial-specific protein LAV1-2 from Physarum polycephalum (Slime mold).